A 683-amino-acid chain; its full sequence is THO complex subunit 5 (683 aa).

A disordered region spans residues 1 to 42; sequence MSSESSKKRKPKVIRSDGAPAEGKRNRSDTEQEGKYYSEEAE. Ser-2 bears the N-acetylserine mark. Residues 2 to 144 form an interaction with CSF1R region; the sequence is SSESSKKRKP…YEVMHLQKEI (143 aa). Residues 2-199 are interaction with THOC7; it reads SSESSKKRKP…RLDWELEQRK (198 aa). Residues Ser-5 and Ser-6 each carry the phosphoserine modification. The Nuclear localization signal motif lies at 7 to 10; sequence KKRK. Basic and acidic residues predominate over residues 22–42; it reads EGKRNRSDTEQEGKYYSEEAE. The stretch at 81–247 forms a coiled coil; that stretch reads AIEIEERRIQ…QASLPVQEYL (167 aa). Lys-153 participates in a covalent cross-link: Glycyl lysine isopeptide (Lys-Gly) (interchain with G-Cter in SUMO2). Tyr-225 is subject to Phosphotyrosine; by SRC. The tract at residues 247 to 683 is tandem RWD domains; that stretch reads LFMPFDQAHK…NHPQGFFSHR (437 aa). The segment at 301-336 is disordered; that stretch reads FKPPEDSQDDESDSDAEEEQTTKRRRPTLGVQLDDK. Over residues 306–319 the composition is skewed to acidic residues; it reads DSQDDESDSDAEEE. Residues Ser-307, Ser-312, and Ser-314 each carry the phosphoserine modification. At Thr-328 the chain carries Phosphothreonine.

This sequence belongs to the THOC5 family. In terms of assembly, component of the THO subcomplex, which is composed of THOC1, THOC2, THOC3, THOC5, THOC6 and THOC7. The THO subcomplex interacts with DDX39B to form the THO-DDX39B complex which multimerizes into a 28-subunit tetrameric assembly. Component of the transcription/export (TREX) complex at least composed of ALYREF/THOC4, DDX39B, SARNP/CIP29, CHTOP and the THO subcomplex; in the complex interacts with THOC1, THOC2, THOC5, THOC6 and THOC7; forms a coiled-coil dimer with THOC7; together with THOC6 and THOC7, plays a key structural role in oligomerization of the THO-DDX39B complex. TREX seems to have a dynamic structure involving ATP-dependent remodeling. Interacts with phosphorylated CSF1R. Interacts (via N-terminus) with the NTF2 domain of NXF1. Forms a complex with CEBPB. Interacts with CPSF6; indicative for an association with the cleavage factor Im (CFIm) complex. Interacts with LUZP4. Interacts with NCBP3. In terms of processing, phosphorylated on tyrosine upon binding to activated CSF1R; which causes a dissociation of the two proteins. Phosphorylation on Ser-5 and/or Ser-6 is required for nuclear export. Phosphorylated on Thr-328 in insulin-stimulated adipocytes. Phosphorylation at Tyr-225 modulates mRNA binding. As to expression, ubiquitously expressed.

It is found in the nucleus. The protein resides in the cytoplasm. Its function is as follows. Component of the THO subcomplex of the TREX complex which is thought to couple mRNA transcription, processing and nuclear export, and which specifically associates with spliced mRNA and not with unspliced pre-mRNA. Plays a key structural role in the oligomerization of the THO-DDX39B complex. TREX is recruited to spliced mRNAs by a transcription-independent mechanism, binds to mRNA upstream of the exon-junction complex (EJC) and is recruited in a splicing- and cap-dependent manner to a region near the 5' end of the mRNA where it functions in mRNA export to the cytoplasm via the TAP/NXF1 pathway. THOC5 in conjunction with ALYREF/THOC4 functions in NXF1-NXT1 mediated nuclear export of HSP70 mRNA; both proteins enhance the RNA binding activity of NXF1 and are required for NXF1 localization to the nuclear rim. Involved in transcription elongation and genome stability. Involved in alternative polyadenylation site choice by recruiting CPSF6 to 5' region of target genes; probably mediates association of the TREX and CFIm complexes. In terms of biological role, regulates the expression of myeloid transcription factors CEBPA, CEBPB and GAB2 by enhancing the levels of phosphatidylinositol 3,4,5-trisphosphate. May be involved in the differentiation of granulocytes and adipocytes. Essential for hematopoietic primitive cell survival and plays an integral role in monocytic development. (Microbial infection) The TREX complex is essential for the export of Kaposi's sarcoma-associated herpesvirus (KSHV) intronless mRNAs and infectious virus production. In Homo sapiens (Human), this protein is THO complex subunit 5 (THOC5).